The sequence spans 657 residues: Pentatricopeptide repeat-containing protein At2g37310 (657 aa).

15 PPR repeats span residues 21–55 (DGGA…SIKP), 56–86 (DNFL…ITVR), 87–121 (NAFS…SCYS), 128–165 (DSIS…GFDS), 166–196 (DVFV…MSER), 197–232 (DVVS…DFKP), 233–267 (NGVT…HIQM), 268–298 (DLSL…MSEK), 299–333 (DSVT…GLST), 334–364 (WNAM…GSRP), 365–399 (NTVT…GADN), 400–430 (NIYV…CKDR), 431–465 (SLIA…GTKP), 466–501 (DDVT…DIEP), and 502–536 (GVEH…PIAK). Residues 537 to 612 (VWGALLNGAS…IPGTSWIETE (76 aa)) are type E motif. Residues 613–643 (KGLRSFIAKDSSCERSKEMYEIIEGLVESMS) are type E(+) motif.

Belongs to the PPR family. PCMP-E subfamily.

This Arabidopsis thaliana (Mouse-ear cress) protein is Pentatricopeptide repeat-containing protein At2g37310 (PCMP-E49).